A 998-amino-acid chain; its full sequence is Mediator of RNA polymerase II transcription subunit 14 (998 aa).

The protein belongs to the Mediator complex subunit 14 family. In terms of assembly, component of the Mediator complex.

The protein resides in the nucleus. Functionally, component of the Mediator complex, a coactivator involved in the regulated transcription of nearly all RNA polymerase II-dependent genes. Mediator functions as a bridge to convey information from gene-specific regulatory proteins to the basal RNA polymerase II transcription machinery. Mediator is recruited to promoters by direct interactions with regulatory proteins and serves as a scaffold for the assembly of a functional preinitiation complex with RNA polymerase II and the general transcription factors. The chain is Mediator of RNA polymerase II transcription subunit 14 (RGR1) from Kluyveromyces lactis (strain ATCC 8585 / CBS 2359 / DSM 70799 / NBRC 1267 / NRRL Y-1140 / WM37) (Yeast).